The sequence spans 469 residues: 3-isopropylmalate dehydratase large subunit (469 aa).

The [4Fe-4S] cluster site is built by cysteine 347, cysteine 407, and cysteine 410. Polar residues predominate over residues 424–441 (SASSSNRNFKGRQGSPSG). Residues 424-443 (SASSSNRNFKGRQGSPSGRT) are disordered.

This sequence belongs to the aconitase/IPM isomerase family. LeuC type 1 subfamily. Heterodimer of LeuC and LeuD. [4Fe-4S] cluster is required as a cofactor.

It carries out the reaction (2R,3S)-3-isopropylmalate = (2S)-2-isopropylmalate. Its pathway is amino-acid biosynthesis; L-leucine biosynthesis; L-leucine from 3-methyl-2-oxobutanoate: step 2/4. Catalyzes the isomerization between 2-isopropylmalate and 3-isopropylmalate, via the formation of 2-isopropylmaleate. This is 3-isopropylmalate dehydratase large subunit from Prochlorococcus marinus (strain MIT 9312).